Here is a 292-residue protein sequence, read N- to C-terminus: Protease HtpX homolog (292 aa).

Helical transmembrane passes span 4-24 (ILLF…VASL) and 39-59 (GALL…SLLI). His-144 contacts Zn(2+). Glu-145 is an active-site residue. Residue His-148 coordinates Zn(2+). Transmembrane regions (helical) follow at residues 159-179 (LIQG…GYAV) and 199-219 (VTTI…VAWF). Glu-224 provides a ligand contact to Zn(2+).

This sequence belongs to the peptidase M48B family. Zn(2+) serves as cofactor.

It localises to the cell inner membrane. The protein is Protease HtpX homolog of Verminephrobacter eiseniae (strain EF01-2).